The chain runs to 566 residues: Transcription factor P14E8.02 (566 aa).

A disordered region spans residues Met-1–Pro-32. Ser-73 is modified (phosphoserine). The 52-residue stretch at Asn-86–Arg-137 folds into the FHA domain. 4 disordered regions span residues Glu-191–Tyr-217, Asp-269–Gly-291, Glu-312–Ser-334, and Phe-364–Asn-437. Acidic residues predominate over residues Asp-314 to Pro-330. Composition is skewed to polar residues over residues Asn-373–Pro-383 and Asp-414–His-428. Ser-379 and Ser-382 each carry phosphoserine.

It belongs to the PLM2/TOS4 family.

It is found in the nucleus. Its function is as follows. Probable transcriptional regulatory protein Required for G1/S progression. This chain is Transcription factor P14E8.02, found in Schizosaccharomyces pombe (strain 972 / ATCC 24843) (Fission yeast).